A 599-amino-acid chain; its full sequence is Serine hydroxymethyltransferase 6 (599 aa).

The segment at 1-25 (MDRIAQSDLSLGFGSSHALPLPHPP) is disordered. Residue lysine 374 is modified to N6-(pyridoxal phosphate)lysine.

Belongs to the SHMT family. As to quaternary structure, homotetramer. Pyridoxal 5'-phosphate is required as a cofactor.

The protein localises to the cytoplasm. The enzyme catalyses (6R)-5,10-methylene-5,6,7,8-tetrahydrofolate + glycine + H2O = (6S)-5,6,7,8-tetrahydrofolate + L-serine. Its pathway is one-carbon metabolism; tetrahydrofolate interconversion. Its function is as follows. Catalyzes the interconversion of serine and glycine. This is Serine hydroxymethyltransferase 6 (SHM6) from Arabidopsis thaliana (Mouse-ear cress).